A 123-amino-acid polypeptide reads, in one-letter code: MPTIQQLIRNARQPIENRKKSPALRGCPQRRGVCARVYTITPKKPNSALRKVARVRLTSGFEITAYIPGIDHNLQEHSVVLVRGGRVKDLPGVRYHIVRGTLDAAEVKDRQQGRSKYGVKKQK.

The protein belongs to the universal ribosomal protein uS12 family. Part of the 30S ribosomal subunit.

The protein resides in the plastid. It is found in the chloroplast. With S4 and S5 plays an important role in translational accuracy. Located at the interface of the 30S and 50S subunits. The chain is Small ribosomal subunit protein uS12c (rps12) from Pinus thunbergii (Japanese black pine).